Here is a 43-residue protein sequence, read N- to C-terminus: Protein PsbN (43 aa).

The helical transmembrane segment at 5–27 (TLVAIPISCLLVSFTGYALYTAF) threads the bilayer.

Belongs to the PsbN family.

It is found in the plastid. The protein resides in the chloroplast thylakoid membrane. Functionally, may play a role in photosystem I and II biogenesis. The sequence is that of Protein PsbN from Sphagnum cuspidatum (Bog moss).